We begin with the raw amino-acid sequence, 414 residues long: Calcium/calmodulin-dependent protein kinase cmkA (414 aa).

The Protein kinase domain maps to Y23 to L278. Residues L29–V37 and K50 contribute to the ATP site. D142 functions as the Proton acceptor in the catalytic mechanism. The autoinhibitory domain stretch occupies residues L278–I314. Residues R293–E315 are calmodulin-binding. 2 disordered regions span residues Q320–L375 and E394–S414. Positions S351–N364 are enriched in polar residues.

It belongs to the protein kinase superfamily. CAMK Ser/Thr protein kinase family. CaMK subfamily. In terms of assembly, monomer. Autophosphorylated in a calcium/calmodulin-dependent manner.

The catalysed reaction is L-seryl-[protein] + ATP = O-phospho-L-seryl-[protein] + ADP + H(+). It catalyses the reaction L-threonyl-[protein] + ATP = O-phospho-L-threonyl-[protein] + ADP + H(+). Activated by Ca(2+)/calmodulin. Binding of calmodulin may relieve intrasteric autoinhibition. Calcium/calmodulin-dependent protein kinase. Required in nuclear division cycle for progression from G2 to mitosis. Required for hyphal growth. The sequence is that of Calcium/calmodulin-dependent protein kinase cmkA (cmkA) from Emericella nidulans (strain FGSC A4 / ATCC 38163 / CBS 112.46 / NRRL 194 / M139) (Aspergillus nidulans).